Consider the following 65-residue polypeptide: Large ribosomal subunit protein bL35 (65 aa).

The disordered stretch occupies residues 1–28; the sequence is MPKIKTNRGAAKRFRKTGSGKIRRNKAF. Residues 10 to 26 show a composition bias toward basic residues; it reads AAKRFRKTGSGKIRRNK.

Belongs to the bacterial ribosomal protein bL35 family.

The chain is Large ribosomal subunit protein bL35 from Syntrophotalea carbinolica (strain DSM 2380 / NBRC 103641 / GraBd1) (Pelobacter carbinolicus).